Here is a 306-residue protein sequence, read N- to C-terminus: Ornithine carbamoyltransferase (306 aa).

Residues serine 53–threonine 56, glutamine 80, arginine 104, and histidine 131–glutamine 134 each bind carbamoyl phosphate. L-ornithine is bound by residues asparagine 162, aspartate 219, and serine 223–methionine 224. Residues cysteine 259–leucine 260 and arginine 287 contribute to the carbamoyl phosphate site.

The protein belongs to the aspartate/ornithine carbamoyltransferase superfamily. OTCase family.

The protein resides in the cytoplasm. The catalysed reaction is carbamoyl phosphate + L-ornithine = L-citrulline + phosphate + H(+). Its pathway is amino-acid biosynthesis; L-arginine biosynthesis; L-arginine from L-ornithine and carbamoyl phosphate: step 1/3. Functionally, reversibly catalyzes the transfer of the carbamoyl group from carbamoyl phosphate (CP) to the N(epsilon) atom of ornithine (ORN) to produce L-citrulline. This chain is Ornithine carbamoyltransferase, found in Psychrobacter sp. (strain PRwf-1).